A 161-amino-acid polypeptide reads, in one-letter code: UPF0262 protein mll6455 (161 aa).

It belongs to the UPF0262 family.

The sequence is that of UPF0262 protein mll6455 from Mesorhizobium japonicum (strain LMG 29417 / CECT 9101 / MAFF 303099) (Mesorhizobium loti (strain MAFF 303099)).